Here is a 198-residue protein sequence, read N- to C-terminus: Nucleoid occlusion factor SlmA (198 aa).

Residues 10–70 (NRREEILQSL…SLIEFIEDSL (61 aa)) enclose the HTH tetR-type domain. The H-T-H motif DNA-binding region spans 33–52 (TTAKLAASVGVSEAALYRHF). Residues 117-145 (EQDRLQGRINQLFERIEAQLRQVMREKKM) are a coiled coil.

Belongs to the nucleoid occlusion factor SlmA family. In terms of assembly, homodimer. Interacts with FtsZ.

It localises to the cytoplasm. Its subcellular location is the nucleoid. Required for nucleoid occlusion (NO) phenomenon, which prevents Z-ring formation and cell division over the nucleoid. Acts as a DNA-associated cell division inhibitor that binds simultaneously chromosomal DNA and FtsZ, and disrupts the assembly of FtsZ polymers. SlmA-DNA-binding sequences (SBS) are dispersed on non-Ter regions of the chromosome, preventing FtsZ polymerization at these regions. This is Nucleoid occlusion factor SlmA from Klebsiella pneumoniae subsp. pneumoniae (strain ATCC 700721 / MGH 78578).